The sequence spans 614 residues: GPI transamidase component GAA1 (614 aa).

The Cytoplasmic segment spans residues 1-19 (MALLEKLHRRIVDMGLVPR). Residues 20-40 (IIALLPVISMLCALFGFISIA) form a helical membrane-spanning segment. Residues 41–356 (ILPMDGQYRR…APRQFVSISS (316 aa)) lie on the Lumenal side of the membrane. Asparagine 87 carries an N-linked (GlcNAc...) asparagine glycan. The chain crosses the membrane as a helical span at residues 357–377 (YLPSAVALSIAFAISSLNAFI). The Cytoplasmic portion of the chain corresponds to 378 to 394 (NNAYANISLFSEYNLVA). Residues 395-415 (LLVWFVSLVISFVVSQAFLLI) form a helical membrane-spanning segment. Residues 416 to 464 (PSSGLLMTISMASCFLPLILSRKIHISEPLSYRLKNVAFLYFSLVSTSL) are Lumenal-facing. The helical transmembrane segment at 465 to 485 (LMINFAMALLIGTLAFPMTFV) threads the bilayer. At 486-535 (KTIVESSSEHEVTTQSSNPIKTEPKDEIELVENHMDTTPATPQQQKQKLK) the chain is on the cytoplasmic side. The helical transmembrane segment at 536 to 556 (NLVLLILTNPFISITLFGLFF) threads the bilayer. Over 557–577 (DDEFHGFDIINKLVSAWLDLK) the chain is Lumenal. The chain crosses the membrane as a helical span at residues 578-598 (CWSWFVLCIGWLPCWLLILAS). Over 599 to 614 (SFESKSVVVRSKEKQS) the chain is Cytoplasmic. The short motif at 610–614 (KEKQS) is the Prevents secretion from ER element.

In terms of assembly, forms a complex with CDC91, GPI17, GPI16 and GPI8.

Its subcellular location is the endoplasmic reticulum membrane. It participates in glycolipid biosynthesis; glycosylphosphatidylinositol-anchor biosynthesis. Component of the GPI transamidase complex. Required for a terminal step of GPI anchor attachment onto proteins. Affects endocytosis. The polypeptide is GPI transamidase component GAA1 (GAA1) (Saccharomyces cerevisiae (strain ATCC 204508 / S288c) (Baker's yeast)).